The primary structure comprises 224 residues: Pleckstrin homology domain-containing family B member 2 (224 aa).

One can recognise a PH domain in the interval 2–109 (AFVKSGWLLR…WKIALQDART (108 aa)). Lysine 20 lines the a 1,2-diacyl-sn-glycero-3-phospho-L-serine pocket.

It is found in the recycling endosome membrane. In terms of biological role, involved in retrograde transport of recycling endosomes. This is Pleckstrin homology domain-containing family B member 2 (PLEKHB2) from Gallus gallus (Chicken).